A 266-amino-acid polypeptide reads, in one-letter code: NADP-dependent mannitol dehydrogenase (266 aa).

Positions 31, 33, 107, and 140 each coordinate NADP(+). The active-site Proton donor is the serine 159. Positions 174, 178, 206, and 208 each coordinate NADP(+). The active-site Proton acceptor is tyrosine 174. The active-site Lowers pKa of active site Tyr is the lysine 178.

Belongs to the short-chain dehydrogenases/reductases (SDR) family. As to quaternary structure, homotetramer.

The protein resides in the vacuole. The enzyme catalyses D-mannitol + NADP(+) = D-fructose + NADPH + H(+). This Alternaria alternata (Alternaria rot fungus) protein is NADP-dependent mannitol dehydrogenase.